The primary structure comprises 1318 residues: 1-phosphatidylinositol 4,5-bisphosphate phosphodiesterase classes I and II (1318 aa).

One can recognise a PI-PLC X-box domain in the interval 318–466 (DDMDQPMSHY…LRRKIIIKNK (149 aa)). Residues His-333 and His-378 contribute to the active site. Residues Lys-464 and Lys-466 each contribute to the substrate site. Residues 466-481 (KKKHHHHHHHHHHKKP) show a composition bias toward basic residues. Disordered regions lie at residues 466–489 (KKKHHHHHHHHHHKKPAQVGTPAA) and 505–594 (QQVG…KETE). Composition is skewed to low complexity over residues 528–543 (ATGTGTGSAAGTAGHA) and 554–563 (KDSTGSSDSD). Over residues 571–580 (LPNTTPNLPS) the composition is skewed to polar residues. The span at 585-594 (PPEKAQKETE) shows a compositional bias: basic and acidic residues. A PI-PLC Y-box domain is found at 599–715 (ISALVNYVQP…GYLLKPEFMR (117 aa)). Substrate-binding residues include Ser-628 and Arg-655. A C2 domain is found at 715–843 (RRSDRRLDPF…NLRSEVGQPI (129 aa)). Disordered regions lie at residues 1080-1112 (LDLGDSSEESAAADAGEDLAGGSSSLDGRTQES) and 1296-1318 (GSHSAISPAKSHNSIAAAAEMKT). Low complexity predominate over residues 1088–1107 (ESAAADAGEDLAGGSSSLDG).

Expressed in neuronal cell bodies of the optic lobe, central brain, and thoracic ganglia in adults, and the brain of larvae.

The enzyme catalyses a 1,2-diacyl-sn-glycero-3-phospho-(1D-myo-inositol-4,5-bisphosphate) + H2O = 1D-myo-inositol 1,4,5-trisphosphate + a 1,2-diacyl-sn-glycerol + H(+). The production of the second messenger molecules diacylglycerol (DAG) and inositol 1,4,5-trisphosphate (IP3) is mediated by activated phosphatidylinositol-specific phospholipase C enzymes. This Drosophila melanogaster (Fruit fly) protein is 1-phosphatidylinositol 4,5-bisphosphate phosphodiesterase classes I and II (Plc21C).